Here is a 289-residue protein sequence, read N- to C-terminus: 3-methyl-2-oxobutanoate hydroxymethyltransferase (289 aa).

A compositionally biased stretch (low complexity) spans 1–10 (MSDSKSSAST). Residues 1-33 (MSDSKSSASTSEDRLYGSAPSHDVPKRKTRTHH) form a disordered region. Mg(2+) is bound by residues D70 and D109. Residues 70 to 71 (DS), D109, and K139 each bind 3-methyl-2-oxobutanoate. Residue E141 coordinates Mg(2+). E207 serves as the catalytic Proton acceptor.

The protein belongs to the PanB family. Homodecamer; pentamer of dimers. It depends on Mg(2+) as a cofactor.

It localises to the cytoplasm. The catalysed reaction is 3-methyl-2-oxobutanoate + (6R)-5,10-methylene-5,6,7,8-tetrahydrofolate + H2O = 2-dehydropantoate + (6S)-5,6,7,8-tetrahydrofolate. Its pathway is cofactor biosynthesis; (R)-pantothenate biosynthesis; (R)-pantoate from 3-methyl-2-oxobutanoate: step 1/2. Its function is as follows. Catalyzes the reversible reaction in which hydroxymethyl group from 5,10-methylenetetrahydrofolate is transferred onto alpha-ketoisovalerate to form ketopantoate. This Rhodococcus jostii (strain RHA1) protein is 3-methyl-2-oxobutanoate hydroxymethyltransferase.